The following is an 834-amino-acid chain: Protein Jade-1 (834 aa).

The tract at residues 1 to 46 (MKRGRLPSSSEDSDDNGSLSTTWSQHSRSQHGRSSTCSRPEDRKPS) is disordered. Over residues 24 to 35 (SQHSRSQHGRSS) the composition is skewed to low complexity. Positions 61–81 (DSYQLNPDDYYVLADPWRQEW) are interaction with KAT7/HBO1 and histones. Residues 81-189 (WEKGVQVPVS…EQRCYDNMNH (109 aa)) form an interaction with histones region. Ser90 is modified (phosphoserine). Position 93 is a phosphothreonine (Thr93). A Glycyl lysine isopeptide (Lys-Gly) (interchain with G-Cter in SUMO2) cross-link involves residue Lys115. Residues 204 to 254 (DVVCDVCQSPDGEDGNEMVFCDKCNICVHQACYGILKVPEGSWLCRTCALG) form a PHD-type 1 zinc finger. A C2HC pre-PHD-type zinc finger spans residues 256-290 (QPKCLLCPKKGGAMKPTRSGTKWVHVSCALWIPEV). The segment at 314–370 (LVCSLCNEKFGASIQCSVKNCRTAFHVTCAFDRGLEMKTILAENDEVKFKSYCPKHS) adopts a PHD-type 2 zinc-finger fold. Positions 367–409 (PKHSSHRKPEEGLGEGAAQENGAPESSPQSPLEPYGSLEPNRE) are disordered. Lys573 participates in a covalent cross-link: Glycyl lysine isopeptide (Lys-Gly) (interchain with G-Cter in SUMO2). Disordered stretches follow at residues 589 to 621 (HPLK…CGRR) and 676 to 716 (DKSF…GTRK). Ser603 is subject to Phosphoserine. The residue at position 609 (Lys609) is an N6-acetyllysine. Ser704 and Ser735 each carry phosphoserine. The disordered stretch occupies residues 738–819 (KSWGGFRIPK…EKKCIHASST (82 aa)). 2 stretches are compositionally biased toward basic and acidic residues: residues 747 to 768 (KKGE…HSDC) and 777 to 790 (PAKE…RADS).

This sequence belongs to the JADE family. Component of the HBO1 complex composed at least of ING4 or ING5, KAT7/HBO1, MEAF6, and one of JADE1, JADE2 and JADE3. Interacts with NPHP4. As to expression, highly expressed in kidney. Also present in liver (at protein level).

The protein localises to the nucleus. It is found in the chromosome. Its subcellular location is the cytoplasm. The protein resides in the cytoskeleton. It localises to the cilium basal body. Scaffold subunit of some HBO1 complexes, which have a histone H4 acetyltransferase activity. Plays a key role in HBO1 complex by directing KAT7/HBO1 specificity towards histone H4 acetylation (H4K5ac, H4K8ac and H4K12ac), regulating DNA replication initiation, regulating DNA replication initiation. May also promote acetylation of nucleosomal histone H4 by KAT5. Promotes apoptosis. May act as a renal tumor suppressor. Negatively regulates canonical Wnt signaling; at least in part, cooperates with NPHP4 in this function. The protein is Protein Jade-1 (Jade1) of Mus musculus (Mouse).